The following is a 430-amino-acid chain: Serine--tRNA ligase (430 aa).

237–239 (TAE) contributes to the L-serine binding site. An ATP-binding site is contributed by 268 to 270 (RAE). Residue Glu-291 coordinates L-serine. 355–358 (EVSS) provides a ligand contact to ATP. An L-serine-binding site is contributed by Ser-391.

This sequence belongs to the class-II aminoacyl-tRNA synthetase family. Type-1 seryl-tRNA synthetase subfamily. In terms of assembly, homodimer. The tRNA molecule binds across the dimer.

It is found in the cytoplasm. It carries out the reaction tRNA(Ser) + L-serine + ATP = L-seryl-tRNA(Ser) + AMP + diphosphate + H(+). The enzyme catalyses tRNA(Sec) + L-serine + ATP = L-seryl-tRNA(Sec) + AMP + diphosphate + H(+). It participates in aminoacyl-tRNA biosynthesis; selenocysteinyl-tRNA(Sec) biosynthesis; L-seryl-tRNA(Sec) from L-serine and tRNA(Sec): step 1/1. Its function is as follows. Catalyzes the attachment of serine to tRNA(Ser). Is also able to aminoacylate tRNA(Sec) with serine, to form the misacylated tRNA L-seryl-tRNA(Sec), which will be further converted into selenocysteinyl-tRNA(Sec). The chain is Serine--tRNA ligase from Baumannia cicadellinicola subsp. Homalodisca coagulata.